The chain runs to 2053 residues: MTTRGANPVLCLVGQACRDNADRPAVEDGYGNRLSYAQLDEKSTEVAQYLSGLGARPGEIIPLLTSSCPEMVIGVLGIIKAGCTYVPIDRVQWPQNRIDEVLKRCNPRIALYTGGEIQIENCETVRLPLCPRKVAPRHENSSSLGPEIMCIIFTSGTTNKPKAVQIRSTSVAALVSSPAFNYDVQPGDRVLLVLSVAFDACMATLFSTLCNGGTVMLANTHNFQQVGSRCNILVLTPSILESLRPPTLFSDYEDVQKIILGGETPSRALLKSWSVLQIPIWIAYGPTEATCAVLTECLERSATTGDYYPNRFGRVIPGGSLLLLDDDNKVVEELNNERELCIAGECLAAGYWKDEEKTRTHFVVHKGERVYRTGDIAKWVLSDQGSLVLELCGRRDRVAKVRGFLVNLDHDVDACLMQLDENVKAAFSLVIDGRLCTAIVCAGSINEKQLRVQWRKRSPPYMISDHICSFESLPLTPNGKIEPKGVARLLEAQLPTPVLNPKRSYASVDEVIVDKASSLLGLPAAEICLEASLVSQGLHSLAAAKLSAFCHQRGFEVPVEDILTQPSVAHLITVCRERRPQVSLPYCAVDAVPEENVIIPFHQKLILASLNDPSLYCVKHVSHHSTIDIPKLKAAWMSVVAAEPGLRTVFKVQDTIITRHVGLPKDVRWMETVVGSHEDIQREIALLDQDTGLGSQFRVLNFRGPKLPPGESMLVWAIHHALIDGFSASLIFERLDALVRGEDLESSPAYTLVARDVIQYQALIAPKAETFWKQQTEAYPTASSDLLLPESSGENGKGYATYTLSQKLNLSSIDEIARKARVTPAAIFFAAWALVLGLYTGSDTVLFGAVLSGRNLPFEWAQRFVGALINTLPLRMRVARTDTPVNLLQSVHRTVQALSSICAARPPADAPKVTTALVIQEDGLKDGSCEIRGLKEPYVHECVDIPLLAAVEGDKLRFLYHQGSMSGVQIEGIASAFLNSIVALTDPKIHYLKGAFARQISPPIRQRVLEAGNISSPATRMDSQVHTVPAMFYSAAARNPTNIAVDKAGSTLTYHALAEYVTIVSHVVQALVPQGEAVAVLADRSINWVIAAFAALAANTIYCPLDSTYESAYRSTLLRRSKAKLLLVPRACTEVQACGNVITLGVDQILSLNIEPSLCSQRPPGPSDTAYLCFTSGSTGQPKGVLCEHRGVVALQSSPEFRLHAQPGVRVAQFLASGFDGCIYELFGALCYGGTLVLRTHDHDSFSHLKDVDAAMINPSVAGQLNPCDYPNLKYWFLQLAFGGEPVPETIADRWASGRMLYNAYGPTEASIQSCQQLLLKGKPVTIGRPLPTTRLYILNDHLELQPPGTVGDIYVAGVQVSKGYLDQPEATARDFMLDPFATWSSNERMYRTGDLGFWDKDWNLHCCGRRDRQVKLRGYRVSLDGIATIAHQSMSQIHAAIAVIQNERIALWVEPATVCIHTLHQKLSTALPPHAVPRNIRAVEKIPLSTNGKLHAKALLETPDMDPPDSLESVPDTSVKKIIEDEWRKILGQSSSVTVRGSDEFLVHGGDSLLQLTLAARMKQVFRVPITPTDIIQSVSFDDIVALVEGKIRAKSLHDDLQGELNATASLGQKDVSSAELWWVYRYLNSQCQSGFNVPYVANLSPSVDRHRLATSLETVFNRHRILRSRFEVIDGTAQRVIADEPIVVSIVPAADVDTFVNLPFDITRGPLVRAIIAPSLLAITISHIVCDLTALKVILQETATLYGGDQLQPVEREYFDITTWNQPIEPAKAEFWTKSLEGLVLDYADKAKQSRSYRGTSVVGTVPARLYRKLVTRTIKRGSTLHQLGLTVSALVLHILSQRNHICLGSPYINRLSTEDQTVVGLCLEPLPIRIRIDAMQCTADDLIQQVRQASQSTLAHAVPWSTLLAHLGLPVQTDSSQIFDCVVTFHDDRAKTQMLPIDGISHRQIYPEGSKFAMLFEWHALPERLQLRLEYDSDHITPDIAQLVQFLSLHCAELVLNAKMKNLHIQQELKRALKQKCRELRLNIDDVRNVAREFLVSASKSKGKRS.

Positions Ala-16–Arg-402 are adenylation 1. Residues Arg-503–Arg-579 enclose the Carrier 1 domain. Ser-540 carries the O-(pantetheine 4'-phosphoryl)serine modification. A condensation 1 region spans residues Asn-611 to Gln-896. The tract at residues Ser-1034–Arg-1418 is adenylation 2. Residues Val-1515 to Ile-1593 form the Carrier 2 domain. Ser-1553 bears the O-(pantetheine 4'-phosphoryl)serine mark. Residues Asn-1630–Asp-1981 form a condensation 2 region.

This sequence belongs to the NRP synthetase family. Pantetheine 4'-phosphate is required as a cofactor.

It participates in secondary metabolite biosynthesis. Nonribosomal peptide synthetase; part of the gene cluster that mediates the biosynthesis of protubonine B, a hydroxylated and diacetylated cyclo-L-Trp-L-Leu derivative. The first step of the protubonine B synthesis is performed by the nonribosomal peptide synthetase pboA that catalyzes the formation of cyclo-L-Trp-L-Leu by condensing L-Leu with L-Trp. The flavin-dependent monooxygenase pboD is responsible for hydroxylation at C-3 of the indole ring and subsequent formation of the pyrrolidine ring, leadind to protubonine D. Protubonine D is further diacetylated by two acetyltransferases, pboB and pboC, to form the final product protubonine B via protubonine C. This chain is Nonribosomal peptide synthetase pboA, found in Aspergillus ustus.